Reading from the N-terminus, the 168-residue chain is Protein archease (168 aa).

At A2 the chain carries N-acetylalanine. Ca(2+) is bound by residues D39, D167, and I168.

The protein belongs to the archease family. In terms of assembly, component of the tRNA-splicing ligase complex.

In terms of biological role, component of the tRNA-splicing ligase complex required to facilitate the enzymatic turnover of catalytic subunit RTCB. Together with DDX1, acts by facilitating the guanylylation of RTCB, a key intermediate step in tRNA ligation. In Mus musculus (Mouse), this protein is Protein archease (Zbtb8os).